Reading from the N-terminus, the 388-residue chain is Transcription factor SOX-7 (388 aa).

Disordered stretches follow at residues 20–46 and 140–197; these read DAEL…SRIR and RDQN…VDTY. 2 stretches are compositionally biased toward basic and acidic residues: residues 36–45 and 146–164; these read PGDKGSESRI and PEKR…DRGE. A DNA-binding region (HMG box) is located at residues 45–113; that stretch reads IRRPMNAFMV…QHMQDYPNYK (69 aa). Residues 268 to 388 form the Sox C-terminal domain; the sequence is VSMMSPVPGC…ATYYNSYSVS (121 aa).

As to quaternary structure, interacts with CTNNB1/beta-catenin; this interaction may lead to the proteasomal degradation of active CTNNB1 and thus inhibition of Wnt/beta-catenin-stimulated transcription. As to expression, widely expressed in adult and fetal tissues. Present both in mesenchymal and epithelial cells in some adult tissues, including colon. Tends to be down-regulated in prostate adenocarcinomas and colorectal tumors due to promoter hypermethylation.

The protein localises to the nucleus. Its subcellular location is the cytoplasm. In terms of biological role, binds to and activates the CDH5 promoter, hence plays a role in the transcriptional regulation of genes expressed in the hemogenic endothelium and blocks further differentiation into blood precursors. May be required for the survival of both hematopoietic and endothelial precursors during specification. Competes with GATA4 for binding and activation of the FGF3 promoter. Represses Wnt/beta-catenin-stimulated transcription, probably by targeting CTNNB1 to proteasomal degradation. Binds the DNA sequence 5'-AACAAT-3'. The polypeptide is Transcription factor SOX-7 (SOX7) (Homo sapiens (Human)).